The following is a 294-amino-acid chain: Ribosomal protein L11 methyltransferase (294 aa).

Thr145, Gly167, Asp189, and Asn230 together coordinate S-adenosyl-L-methionine.

It belongs to the methyltransferase superfamily. PrmA family.

It is found in the cytoplasm. It carries out the reaction L-lysyl-[protein] + 3 S-adenosyl-L-methionine = N(6),N(6),N(6)-trimethyl-L-lysyl-[protein] + 3 S-adenosyl-L-homocysteine + 3 H(+). Methylates ribosomal protein L11. This is Ribosomal protein L11 methyltransferase from Alkalilimnicola ehrlichii (strain ATCC BAA-1101 / DSM 17681 / MLHE-1).